A 385-amino-acid chain; its full sequence is uncharacterized protein (385 aa).

This sequence belongs to the phage portal family. HK97 subfamily.

This is an uncharacterized protein from Rickettsia felis (strain ATCC VR-1525 / URRWXCal2) (Rickettsia azadi).